The following is a 338-amino-acid chain: Ketol-acid reductoisomerase (NADP(+)) (338 aa).

In terms of domain architecture, KARI N-terminal Rossmann spans 1 to 181 (MQIFYDKDCD…GGGRTGIIET (181 aa)). Residues 24–27 (YGSQ), Arg47, Ser50, Ser52, and 82–85 (DEFQ) each bind NADP(+). The active site involves His107. Position 133 (Gly133) interacts with NADP(+). In terms of domain architecture, KARI C-terminal knotted spans 182-327 (SFREETETDL…AKLRAMMPWI (146 aa)). The Mg(2+) site is built by Asp190, Glu194, Glu226, and Glu230. Substrate is bound at residue Ser251.

It belongs to the ketol-acid reductoisomerase family. Mg(2+) is required as a cofactor.

It carries out the reaction (2R)-2,3-dihydroxy-3-methylbutanoate + NADP(+) = (2S)-2-acetolactate + NADPH + H(+). The enzyme catalyses (2R,3R)-2,3-dihydroxy-3-methylpentanoate + NADP(+) = (S)-2-ethyl-2-hydroxy-3-oxobutanoate + NADPH + H(+). It functions in the pathway amino-acid biosynthesis; L-isoleucine biosynthesis; L-isoleucine from 2-oxobutanoate: step 2/4. The protein operates within amino-acid biosynthesis; L-valine biosynthesis; L-valine from pyruvate: step 2/4. Involved in the biosynthesis of branched-chain amino acids (BCAA). Catalyzes an alkyl-migration followed by a ketol-acid reduction of (S)-2-acetolactate (S2AL) to yield (R)-2,3-dihydroxy-isovalerate. In the isomerase reaction, S2AL is rearranged via a Mg-dependent methyl migration to produce 3-hydroxy-3-methyl-2-ketobutyrate (HMKB). In the reductase reaction, this 2-ketoacid undergoes a metal-dependent reduction by NADPH to yield (R)-2,3-dihydroxy-isovalerate. The protein is Ketol-acid reductoisomerase (NADP(+)) of Acinetobacter baumannii (strain AB0057).